The following is a 371-amino-acid chain: Cytochrome b (371 aa).

A run of 4 helical transmembrane segments spans residues F25–V45, W69–I90, W105–L125, and F170–M190. Residues H75 and H89 each coordinate heme b. Residues H174 and H188 each coordinate heme b. H193 is a binding site for a ubiquinone. 4 consecutive transmembrane segments (helical) span residues Y218–L238, L280–H300, I312–T332, and F339–P358.

Belongs to the cytochrome b family. As to quaternary structure, the cytochrome bc1 complex contains 3 respiratory subunits (MT-CYB, CYC1 and UQCRFS1), 2 core proteins (UQCRC1 and UQCRC2) and probably 6 low-molecular weight proteins. Heme b serves as cofactor.

It is found in the mitochondrion inner membrane. Component of the ubiquinol-cytochrome c reductase complex (complex III or cytochrome b-c1 complex) that is part of the mitochondrial respiratory chain. The b-c1 complex mediates electron transfer from ubiquinol to cytochrome c. Contributes to the generation of a proton gradient across the mitochondrial membrane that is then used for ATP synthesis. The polypeptide is Cytochrome b (MT-CYB) (Eryx elegans (Central Asian sand boa)).